The chain runs to 101 residues: NADH-quinone oxidoreductase subunit K (101 aa).

A run of 3 helical transmembrane segments spans residues 4 to 24 (LSHY…GIFL), 30 to 50 (IVLL…FIAF), and 61 to 81 (IFVF…LAIL).

Belongs to the complex I subunit 4L family. In terms of assembly, NDH-1 is composed of 14 different subunits. Subunits NuoA, H, J, K, L, M, N constitute the membrane sector of the complex.

The protein resides in the cell inner membrane. The catalysed reaction is a quinone + NADH + 5 H(+)(in) = a quinol + NAD(+) + 4 H(+)(out). Functionally, NDH-1 shuttles electrons from NADH, via FMN and iron-sulfur (Fe-S) centers, to quinones in the respiratory chain. The immediate electron acceptor for the enzyme in this species is believed to be ubiquinone. Couples the redox reaction to proton translocation (for every two electrons transferred, four hydrogen ions are translocated across the cytoplasmic membrane), and thus conserves the redox energy in a proton gradient. The protein is NADH-quinone oxidoreductase subunit K of Aromatoleum aromaticum (strain DSM 19018 / LMG 30748 / EbN1) (Azoarcus sp. (strain EbN1)).